A 442-amino-acid chain; its full sequence is D-serine dehydratase 1 (442 aa).

N6-(pyridoxal phosphate)lysine is present on K118.

It belongs to the serine/threonine dehydratase family. DsdA subfamily. As to quaternary structure, monomer. It depends on pyridoxal 5'-phosphate as a cofactor.

The catalysed reaction is D-serine = pyruvate + NH4(+). In Escherichia coli O6:K15:H31 (strain 536 / UPEC), this protein is D-serine dehydratase 1.